A 122-amino-acid polypeptide reads, in one-letter code: SIVELGKMIIQETGKSPFPSYTSYGCFCGGGERGPPLDATDRCCLAHSCCYDTLPDCSPKTDRYKYKRENGEIICENSTSCKKRICECDKAMAVCLRKNLNTYNKKYTYYPNFWCKGDIEKC.

Intrachain disulfides connect Cys-26–Cys-115, Cys-28–Cys-44, Cys-43–Cys-95, Cys-49–Cys-122, Cys-50–Cys-88, Cys-57–Cys-81, and Cys-75–Cys-86. The segment at 105–117 is important for membrane-damaging activities in eukaryotes and bacteria; heparin-binding; sequence KKYTYYPNFWCKG.

This sequence belongs to the phospholipase A2 family. Group II subfamily. S49 sub-subfamily. Monomer. In terms of tissue distribution, expressed by the venom gland.

It localises to the secreted. Snake venom phospholipase A2 homolog that lacks enzymatic activity. Shows high myotoxin activities and displays edema-inducing activities. Has cytotoxic activities against HUVEC cells (LC(50)=12.2 uL) and human lung adenocarcinoma A549 cells (LC(50)=8.5 uL). This is Phospholipase A2 homolog ECS_00014 from Echis carinatus sochureki (Saw-scaled viper).